Here is a 1650-residue protein sequence, read N- to C-terminus: Phosphatidylinositol 3,4,5-trisphosphate-dependent Rac exchanger 1 protein (1650 aa).

Positions 1–19 (MEAPGSGGGDGGGDPGGDG) are enriched in gly residues. Residues 1 to 33 (MEAPGSGGGDGGGDPGGDGAHPDARGPVSGPCA) form a disordered region. Residues 44–235 (LRLCVLNEIL…KTVCSNINET (192 aa)) enclose the DH domain. The PH domain occupies 266-387 (ELLLQGNLLK…WLDALIRERE (122 aa)). Residue S314 is modified to Phosphoserine. 2 DEP domains span residues 416 to 491 (MSKK…RFRY) and 518 to 592 (SLYA…RFHA). The PDZ domain occupies 620-698 (RLLIPPQEDD…SRRPLRLLVA (79 aa)). The tract at residues 793–813 (ARASQGAPDEDPQEDDQPDSA) is disordered. Positions 800–810 (PDEDPQEDDQP) are enriched in acidic residues. Phosphoserine is present on S991. Disordered regions lie at residues 1022-1047 (SPAV…GAPS) and 1099-1129 (PTSA…EVDR). Polar residues predominate over residues 1030 to 1047 (QGQGLNDSSYGSASGAPS). The span at 1109–1122 (PSLVEETSSSPPVS) shows a compositional bias: low complexity. 2 positions are modified to phosphoserine: S1186 and S1191.

Interacts preferentially with RAC2. Interacts with RAC1. Interacts with AUTS2.

It is found in the cytoplasm. Its subcellular location is the cytosol. The protein resides in the cell membrane. Functionally, functions as a RAC guanine nucleotide exchange factor (GEF), which activates the Rac proteins by exchanging bound GDP for free GTP. Its activity is synergistically activated by phosphatidylinositol 3,4,5-trisphosphate and the beta gamma subunits of heterotrimeric G protein. May function downstream of heterotrimeric G proteins in neutrophils. The sequence is that of Phosphatidylinositol 3,4,5-trisphosphate-dependent Rac exchanger 1 protein (Prex1) from Mus musculus (Mouse).